The sequence spans 214 residues: Potassium/proton antiporter CemA (214 aa).

The next 2 membrane-spanning stretches (helical) occupy residues 92 to 112 (ILHL…SILG) and 174 to 194 (IISG…KYWI).

The protein belongs to the CemA family.

It localises to the plastid. The protein localises to the chloroplast inner membrane. The catalysed reaction is K(+)(in) + H(+)(out) = K(+)(out) + H(+)(in). Functionally, contributes to K(+)/H(+) antiport activity by supporting proton efflux to control proton extrusion and homeostasis in chloroplasts in a light-dependent manner to modulate photosynthesis. Prevents excessive induction of non-photochemical quenching (NPQ) under continuous-light conditions. Indirectly promotes efficient inorganic carbon uptake into chloroplasts. The protein is Potassium/proton antiporter CemA of Oenothera argillicola (Appalachian evening primrose).